The following is a 38-amino-acid chain: Large ribosomal subunit protein bL36A (38 aa).

Belongs to the bacterial ribosomal protein bL36 family.

This is Large ribosomal subunit protein bL36A from Cronobacter sakazakii (strain ATCC BAA-894) (Enterobacter sakazakii).